Consider the following 701-residue polypeptide: Nucleolar transcription factor 1-B (701 aa).

Residues 1 to 21 (MNGAAGGDTQGKMTAPKDQDQ) form a disordered region. 5 DNA-binding regions (HMG box) span residues 112-180 (PKKP…AKFR), 196-264 (PEKP…REYM), 298-362 (TKPP…MRFL), 422-489 (PETP…SDMR), and 508-574 (KKAP…DTWM). Residues 382-426 (MKRKRTNTPASKMATEDAAKVKSRSGQADKKKAAEERAKLPETPK) are disordered. A compositionally biased stretch (basic and acidic residues) spans 408 to 426 (QADKKKAAEERAKLPETPK). Residues 584-701 (AYKEQNTNKR…SADSSDSDSN (118 aa)) are disordered. Residues 597–612 (TKIQAPSSKSKLVIQS) show a composition bias toward polar residues. Acidic residues predominate over residues 615–682 (DDDEDDEDDE…DNEEDDDDNE (68 aa)). Residues 683–695 (SGSSSSSSSSADS) are compositionally biased toward low complexity.

XUBF consists of 2 polypeptides of 82 and 85 kDa, encoded by the same or closely related genes.

It is found in the nucleus. Functionally, UBF recognizes the ribosomal RNA gene promotor and activates transcription mediated by RNA polymerase I through cooperative interactions with the species-specific factor SL1. It binds specifically to the upstream control element. The sequence is that of Nucleolar transcription factor 1-B (ubtf-b) from Xenopus laevis (African clawed frog).